A 945-amino-acid polypeptide reads, in one-letter code: 26S proteasome regulatory subunit RPN2 (945 aa).

N-acetylserine is present on S2. PC repeat units follow at residues 366-399, 403-440, 445-479, 480-514, 516-549, 550-585, 586-618, 620-654, 655-692, and 698-734; these read TATASLGVIHKGNLLEGKKVMAPYLPGSRASSRF, GSLYGLGLIYAGFGRDTTDYLKNIIVENSGTSGDEDVD, GASLGIGLAAMGSANIEVYEALKEVLYNDSATSGE, AAALGMGLCMLGTGKPEAIHDMFTYSQETQHGNIT, GLAVGLALINYGRQELADDLITKMLASDESLLRY, GGAFTIALAYAGTGNNSAVKRLLHVAVSDSNDDVRR, AAVIALGFVLLRDYTTVPRIVQLLSKSHNAHVR, GTAFALGIACAGKGLQSAIDVLDPLTKDPVDFVRQ, AAMIALSMILIQQTEKLNPQVADINKNFLSVITNKHQE, and GACVAQGIMNAGGRNVTIQLENADTGTLDTKSVVGLV. T801 carries the post-translational modification Phosphothreonine. The span at 810 to 819 shows a compositional bias: basic residues; sequence AKARAKKTKK. Positions 810–851 are disordered; sequence AKARAKKTKKEKGPNEEEKKKEHEEKEKERETNKKGIKETKE. Residues 820–851 are compositionally biased toward basic and acidic residues; sequence EKGPNEEEKKKEHEEKEKERETNKKGIKETKE. T932 is modified (phosphothreonine).

This sequence belongs to the proteasome subunit S1 family. In terms of assembly, interacts with UBR1. In terms of processing, N-acetylated by NAT1.

Its function is as follows. Acts as a regulatory subunit of the 26S proteasome which is involved in the ATP-dependent degradation of ubiquitinated proteins. The protein is 26S proteasome regulatory subunit RPN2 (RPN2) of Saccharomyces cerevisiae (strain ATCC 204508 / S288c) (Baker's yeast).